A 470-amino-acid polypeptide reads, in one-letter code: 3-isopropylmalate dehydratase large subunit (470 aa).

Positions 349, 409, and 412 each coordinate [4Fe-4S] cluster.

It belongs to the aconitase/IPM isomerase family. LeuC type 1 subfamily. In terms of assembly, heterodimer of LeuC and LeuD. Requires [4Fe-4S] cluster as cofactor.

It catalyses the reaction (2R,3S)-3-isopropylmalate = (2S)-2-isopropylmalate. It functions in the pathway amino-acid biosynthesis; L-leucine biosynthesis; L-leucine from 3-methyl-2-oxobutanoate: step 2/4. Its function is as follows. Catalyzes the isomerization between 2-isopropylmalate and 3-isopropylmalate, via the formation of 2-isopropylmaleate. The chain is 3-isopropylmalate dehydratase large subunit from Koribacter versatilis (strain Ellin345).